We begin with the raw amino-acid sequence, 237 residues long: Phosphoribosylaminoimidazole-succinocarboxamide synthase (237 aa).

This sequence belongs to the SAICAR synthetase family.

The catalysed reaction is 5-amino-1-(5-phospho-D-ribosyl)imidazole-4-carboxylate + L-aspartate + ATP = (2S)-2-[5-amino-1-(5-phospho-beta-D-ribosyl)imidazole-4-carboxamido]succinate + ADP + phosphate + 2 H(+). It participates in purine metabolism; IMP biosynthesis via de novo pathway; 5-amino-1-(5-phospho-D-ribosyl)imidazole-4-carboxamide from 5-amino-1-(5-phospho-D-ribosyl)imidazole-4-carboxylate: step 1/2. This chain is Phosphoribosylaminoimidazole-succinocarboxamide synthase, found in Enterobacter sp. (strain 638).